Here is a 247-residue protein sequence, read N- to C-terminus: MNEKIAILSAYSFVNIEEPANLIPKLLLIGKRKYVRGTILLANEGFNGSFSGSYENVNLVLEELIKLTGPKDVNVKINYSDVHPFQKLKVRLKKEIVAMNVDGLNVDLFKGEYIEPKDWDEFITKQDVIVIDTRNDYEVEVGTFKSAVNPNTKTFKQFPAWVQQNQELLKGKKIAMVCTGGIRCEKSTSLLKSIGYDEVYHLKGGILQYLEDTQNKNNLWQGECFVFDDRRAVTDDLSPVERHWLQR.

One can recognise a Rhodanese domain in the interval 124–218 (TKQDVIVIDT…YLEDTQNKNN (95 aa)). Residue cysteine 178 is the Cysteine persulfide intermediate of the active site.

Belongs to the TrhO family.

The catalysed reaction is uridine(34) in tRNA + AH2 + O2 = 5-hydroxyuridine(34) in tRNA + A + H2O. Functionally, catalyzes oxygen-dependent 5-hydroxyuridine (ho5U) modification at position 34 in tRNAs. The sequence is that of tRNA uridine(34) hydroxylase from Rickettsia africae (strain ESF-5).